A 339-amino-acid chain; its full sequence is Biotin synthase (339 aa).

Residues 55–282 form the Radical SAM core domain; it reads NAVQLSTLLS…KAVVRLSAGR (228 aa). Positions 70, 74, and 77 each coordinate [4Fe-4S] cluster. The [2Fe-2S] cluster site is built by Cys-114, Cys-145, Cys-205, and Arg-277.

It belongs to the radical SAM superfamily. Biotin synthase family. In terms of assembly, homodimer. It depends on [4Fe-4S] cluster as a cofactor. The cofactor is [2Fe-2S] cluster.

The catalysed reaction is (4R,5S)-dethiobiotin + (sulfur carrier)-SH + 2 reduced [2Fe-2S]-[ferredoxin] + 2 S-adenosyl-L-methionine = (sulfur carrier)-H + biotin + 2 5'-deoxyadenosine + 2 L-methionine + 2 oxidized [2Fe-2S]-[ferredoxin]. It functions in the pathway cofactor biosynthesis; biotin biosynthesis; biotin from 7,8-diaminononanoate: step 2/2. In terms of biological role, catalyzes the conversion of dethiobiotin (DTB) to biotin by the insertion of a sulfur atom into dethiobiotin via a radical-based mechanism. This Burkholderia vietnamiensis (strain G4 / LMG 22486) (Burkholderia cepacia (strain R1808)) protein is Biotin synthase.